Consider the following 234-residue polypeptide: N-(5'-phosphoribosyl)anthranilate isomerase (234 aa).

Positions 211-234 (RAASSSPRPVDGESPAFQRSEKAG) are disordered.

The protein belongs to the TrpF family.

The enzyme catalyses N-(5-phospho-beta-D-ribosyl)anthranilate = 1-(2-carboxyphenylamino)-1-deoxy-D-ribulose 5-phosphate. Its pathway is amino-acid biosynthesis; L-tryptophan biosynthesis; L-tryptophan from chorismate: step 3/5. The protein is N-(5'-phosphoribosyl)anthranilate isomerase of Afipia carboxidovorans (strain ATCC 49405 / DSM 1227 / KCTC 32145 / OM5) (Oligotropha carboxidovorans).